Here is a 331-residue protein sequence, read N- to C-terminus: Adenosine deaminase (331 aa).

Residues H12 and H14 each coordinate Zn(2+). Substrate is bound by residues H14, D16, and G170. H197 serves as a coordination point for Zn(2+). E200 acts as the Proton donor in catalysis. A Zn(2+)-binding site is contributed by D278. D279 contributes to the substrate binding site.

It belongs to the metallo-dependent hydrolases superfamily. Adenosine and AMP deaminases family. Adenosine deaminase subfamily. Zn(2+) serves as cofactor.

It carries out the reaction adenosine + H2O + H(+) = inosine + NH4(+). The enzyme catalyses 2'-deoxyadenosine + H2O + H(+) = 2'-deoxyinosine + NH4(+). Catalyzes the hydrolytic deamination of adenosine and 2-deoxyadenosine. This chain is Adenosine deaminase, found in Shewanella putrefaciens (strain CN-32 / ATCC BAA-453).